The following is a 565-amino-acid chain: Dihydroxy-acid dehydratase (565 aa).

Asp-80 is a Mg(2+) binding site. Position 121 (Cys-121) interacts with [2Fe-2S] cluster. Positions 122 and 123 each coordinate Mg(2+). Lys-123 bears the N6-carboxylysine mark. Cys-194 serves as a coordination point for [2Fe-2S] cluster. Glu-447 provides a ligand contact to Mg(2+). Ser-473 (proton acceptor) is an active-site residue.

Belongs to the IlvD/Edd family. In terms of assembly, homodimer. [2Fe-2S] cluster is required as a cofactor. The cofactor is Mg(2+).

It catalyses the reaction (2R)-2,3-dihydroxy-3-methylbutanoate = 3-methyl-2-oxobutanoate + H2O. The catalysed reaction is (2R,3R)-2,3-dihydroxy-3-methylpentanoate = (S)-3-methyl-2-oxopentanoate + H2O. Its pathway is amino-acid biosynthesis; L-isoleucine biosynthesis; L-isoleucine from 2-oxobutanoate: step 3/4. It participates in amino-acid biosynthesis; L-valine biosynthesis; L-valine from pyruvate: step 3/4. Functions in the biosynthesis of branched-chain amino acids. Catalyzes the dehydration of (2R,3R)-2,3-dihydroxy-3-methylpentanoate (2,3-dihydroxy-3-methylvalerate) into 2-oxo-3-methylpentanoate (2-oxo-3-methylvalerate) and of (2R)-2,3-dihydroxy-3-methylbutanoate (2,3-dihydroxyisovalerate) into 2-oxo-3-methylbutanoate (2-oxoisovalerate), the penultimate precursor to L-isoleucine and L-valine, respectively. This chain is Dihydroxy-acid dehydratase, found in Chlorobium phaeovibrioides (strain DSM 265 / 1930) (Prosthecochloris vibrioformis (strain DSM 265)).